Consider the following 169-residue polypeptide: Peptide methionine sulfoxide reductase MsrA (169 aa).

Residue Cys-13 is part of the active site.

It belongs to the MsrA Met sulfoxide reductase family.

It catalyses the reaction L-methionyl-[protein] + [thioredoxin]-disulfide + H2O = L-methionyl-(S)-S-oxide-[protein] + [thioredoxin]-dithiol. The enzyme catalyses [thioredoxin]-disulfide + L-methionine + H2O = L-methionine (S)-S-oxide + [thioredoxin]-dithiol. In terms of biological role, has an important function as a repair enzyme for proteins that have been inactivated by oxidation. Catalyzes the reversible oxidation-reduction of methionine sulfoxide in proteins to methionine. The polypeptide is Peptide methionine sulfoxide reductase MsrA (Mycolicibacterium gilvum (strain PYR-GCK) (Mycobacterium gilvum (strain PYR-GCK))).